The sequence spans 226 residues: MTWDGLPTQPLLMLLMLLFAAGSESALAGCPGCGPGVQEEDAGSPADGCAETGGCFRREGQPCGVYIPKCAPGLQCQPRENEETPLRALLIGQGRCQRARGPSEETTKESKPHGGASRPRDRDRQKNPRTSAAPIRPSPVQDGEMGPCRRHLDSVLQQLQTEVFRGGANGLYVPNCDLRGFYRKQQCRSSQGNRRGPCWCVDPMGQPLPVSPDGQGSSQCSARSSG.

Positions 1–25 are cleaved as a signal peptide; it reads MTWDGLPTQPLLMLLMLLFAAGSES. The IGFBP N-terminal domain occupies 26–99; the sequence is ALAGCPGCGP…LIGQGRCQRA (74 aa). Cystine bridges form between Cys30-Cys33, Cys49-Cys55, Cys63-Cys76, and Cys70-Cys96. The tract at residues 92–148 is disordered; the sequence is GQGRCQRARGPSEETTKESKPHGGASRPRDRDRQKNPRTSAAPIRPSPVQDGEMGPC. Residues 101 to 126 show a composition bias toward basic and acidic residues; that stretch reads GPSEETTKESKPHGGASRPRDRDRQK. In terms of domain architecture, Thyroglobulin type-1 spans 145-220; the sequence is MGPCRRHLDS…SPDGQGSSQC (76 aa). Disulfide bonds link Cys148/Cys176, Cys187/Cys198, and Cys200/Cys220. Residues 205–226 are disordered; that stretch reads GQPLPVSPDGQGSSQCSARSSG. The span at 214–226 shows a compositional bias: polar residues; that stretch reads GQGSSQCSARSSG.

As to quaternary structure, interacts (via C-terminal domain) with PHB2. O-glycosylated.

The protein localises to the secreted. IGF-binding proteins prolong the half-life of the IGFs and have been shown to either inhibit or stimulate the growth promoting effects of the IGFs on cell culture. They alter the interaction of IGFs with their cell surface receptors. Activates the MAPK signaling pathway and induces cell migration. This Rattus norvegicus (Rat) protein is Insulin-like growth factor-binding protein 6 (Igfbp6).